We begin with the raw amino-acid sequence, 214 residues long: Small ribosomal subunit protein uS5 (214 aa).

Residues 54–117 (MKYEVIDIGM…RDAKMHVIPV (64 aa)) enclose the S5 DRBM domain.

Belongs to the universal ribosomal protein uS5 family. Part of the 30S ribosomal subunit. Contacts protein S4.

With S4 and S12 plays an important role in translational accuracy. The chain is Small ribosomal subunit protein uS5 from Metallosphaera sedula (strain ATCC 51363 / DSM 5348 / JCM 9185 / NBRC 15509 / TH2).